Here is a 268-residue protein sequence, read N- to C-terminus: Nickel import ATP-binding protein NikE (268 aa).

Residues 4–252 form the ABC transporter domain; that stretch reads LNVSDLSHHY…SSDAGRVLQN (249 aa). 45–52 lines the ATP pocket; that stretch reads GRSGCGKS.

The protein belongs to the ABC transporter superfamily. Nickel importer (TC 3.A.1.5.3) family. The complex is composed of two ATP-binding proteins (NikD and NikE), two transmembrane proteins (NikB and NikC) and a solute-binding protein (NikA).

The protein localises to the cell inner membrane. The catalysed reaction is Ni(2+)(out) + ATP + H2O = Ni(2+)(in) + ADP + phosphate + H(+). Functionally, part of the ABC transporter complex NikABCDE involved in nickel import. Responsible for energy coupling to the transport system. This chain is Nickel import ATP-binding protein NikE, found in Escherichia coli O6:K15:H31 (strain 536 / UPEC).